We begin with the raw amino-acid sequence, 162 residues long: D-aminoacyl-tRNA deacylase (162 aa).

Residues 145-146 carry the Gly-cisPro motif, important for rejection of L-amino acids motif; sequence GP.

The protein belongs to the DTD family. As to quaternary structure, homodimer.

It localises to the cytoplasm. It catalyses the reaction glycyl-tRNA(Ala) + H2O = tRNA(Ala) + glycine + H(+). The enzyme catalyses a D-aminoacyl-tRNA + H2O = a tRNA + a D-alpha-amino acid + H(+). An aminoacyl-tRNA editing enzyme that deacylates mischarged D-aminoacyl-tRNAs. Also deacylates mischarged glycyl-tRNA(Ala), protecting cells against glycine mischarging by AlaRS. Acts via tRNA-based rather than protein-based catalysis; rejects L-amino acids rather than detecting D-amino acids in the active site. By recycling D-aminoacyl-tRNA to D-amino acids and free tRNA molecules, this enzyme counteracts the toxicity associated with the formation of D-aminoacyl-tRNA entities in vivo and helps enforce protein L-homochirality. This chain is D-aminoacyl-tRNA deacylase, found in Bifidobacterium longum subsp. infantis (strain ATCC 15697 / DSM 20088 / JCM 1222 / NCTC 11817 / S12).